Here is a 103-residue protein sequence, read N- to C-terminus: Small ribosomal subunit protein uS10 (103 aa).

It belongs to the universal ribosomal protein uS10 family. As to quaternary structure, part of the 30S ribosomal subunit.

Functionally, involved in the binding of tRNA to the ribosomes. This is Small ribosomal subunit protein uS10 from Alkalilimnicola ehrlichii (strain ATCC BAA-1101 / DSM 17681 / MLHE-1).